The sequence spans 230 residues: MPKHGKKYLDAAKKVDSNKLYSVAEAMKLVKETSYANFDATIDVAYNLSVDPKQADQQIRGSIVLPNGTGKTQTVVVFAEGPQAEQAKAAGADFVGSDDLVEKIQGGWLDFDVVVATPMMMAKVGRLGRVLGPKGLMPNPKTGTVTMDIEKAVKNVKAGQVEYRVDRQAAIHTPIGKVSFTEDQLVENFDALRDVILRARPASAKGQYIKSVAVSATFGPGIKLDPLNLD.

Belongs to the universal ribosomal protein uL1 family. Part of the 50S ribosomal subunit.

Functionally, binds directly to 23S rRNA. The L1 stalk is quite mobile in the ribosome, and is involved in E site tRNA release. Protein L1 is also a translational repressor protein, it controls the translation of the L11 operon by binding to its mRNA. This is Large ribosomal subunit protein uL1 from Lactobacillus acidophilus (strain ATCC 700396 / NCK56 / N2 / NCFM).